The following is a 227-amino-acid chain: 27 kDa A-type inclusion protein (227 aa).

The stretch at Met4–Ser210 forms a coiled coil.

The sequence is that of 27 kDa A-type inclusion protein from Bos taurus (Bovine).